A 103-amino-acid polypeptide reads, in one-letter code: Sperm-associated antigen 11B (103 aa).

A signal peptide spans 1–25 (MRQRLLPSVTSLLLVALLFPGSSQA). Residue Asn-29 is glycosylated (N-linked (GlcNAc...) asparagine).

It belongs to the SPAG11 family. As to expression, specifically expressed in caput and proximal corpus of epididymis (at protein level). Present in the epididymal epithelium and on the sperm surface, with a subacrosomal equatorial distribution on the sperm head (at protein level).

The protein localises to the secreted. Functionally, has antimicrobial activity against E.coli. Plays a role in the defense response in the male reproductive tract, contributing to sperm maturation, storage and protection. The chain is Sperm-associated antigen 11B from Homo sapiens (Human).